We begin with the raw amino-acid sequence, 427 residues long: L-rhamnose isomerase (427 aa).

Mn(2+)-binding residues include His-264, Asp-296, and Asp-298.

This sequence belongs to the rhamnose isomerase family. Requires Mn(2+) as cofactor.

The protein localises to the cytoplasm. It catalyses the reaction L-rhamnopyranose = L-rhamnulose. It participates in carbohydrate degradation; L-rhamnose degradation; glycerone phosphate from L-rhamnose: step 1/3. Catalyzes the interconversion of L-rhamnose and L-rhamnulose. The chain is L-rhamnose isomerase from Rhodopirellula baltica (strain DSM 10527 / NCIMB 13988 / SH1).